The primary structure comprises 196 residues: RNA polymerase II subunit B1 CTD phosphatase RTR2 (196 aa).

The RTR1-type zinc finger occupies 52 to 123 (YLARLLSPMS…LSQTPLHERR (72 aa)). Zn(2+) contacts are provided by C75, C80, C99, and H103.

It belongs to the RPAP2 family.

Its subcellular location is the cytoplasm. It localises to the nucleus. It carries out the reaction O-phospho-L-seryl-[protein] + H2O = L-seryl-[protein] + phosphate. It catalyses the reaction O-phospho-L-threonyl-[protein] + H2O = L-threonyl-[protein] + phosphate. Functionally, probable RNA polymerase II subunit B1 C-terminal domain (CTD) phosphatase that regulates RNA polymerase II transcription. May have functional redundancy with RTR1. In Saccharomyces cerevisiae (strain ATCC 204508 / S288c) (Baker's yeast), this protein is RNA polymerase II subunit B1 CTD phosphatase RTR2 (RTR2).